The sequence spans 238 residues: Ribosomal RNA small subunit methyltransferase G (238 aa).

Residues Gly77, Phe82, 128-129 (AE), and Arg147 each bind S-adenosyl-L-methionine.

This sequence belongs to the methyltransferase superfamily. RNA methyltransferase RsmG family.

It localises to the cytoplasm. Specifically methylates the N7 position of guanine in position 535 of 16S rRNA. This is Ribosomal RNA small subunit methyltransferase G from Listeria monocytogenes serotype 4b (strain F2365).